Consider the following 388-residue polypeptide: Putative 8-amino-7-oxononanoate synthase (388 aa).

Arginine 22 lines the substrate pocket. Residue 109–110 (GY) participates in pyridoxal 5'-phosphate binding. Residue histidine 134 participates in substrate binding. Pyridoxal 5'-phosphate contacts are provided by residues serine 182, 207–210 (DEAH), and 237–240 (TLSK). Lysine 240 carries the N6-(pyridoxal phosphate)lysine modification. Threonine 354 is a substrate binding site.

Belongs to the class-II pyridoxal-phosphate-dependent aminotransferase family. BioF subfamily. As to quaternary structure, homodimer. It depends on pyridoxal 5'-phosphate as a cofactor.

It carries out the reaction 6-carboxyhexanoyl-[ACP] + L-alanine + H(+) = (8S)-8-amino-7-oxononanoate + holo-[ACP] + CO2. It functions in the pathway cofactor biosynthesis; biotin biosynthesis. In terms of biological role, catalyzes the decarboxylative condensation of pimeloyl-[acyl-carrier protein] and L-alanine to produce 8-amino-7-oxononanoate (AON), [acyl-carrier protein], and carbon dioxide. The protein is Putative 8-amino-7-oxononanoate synthase (bioF) of Gloeobacter violaceus (strain ATCC 29082 / PCC 7421).